A 255-amino-acid chain; its full sequence is Putative expansin-A27 (255 aa).

The N-terminal stretch at 1 to 24 (MGAMAENLLVLCTILAARMALAAA) is a signal peptide. In terms of domain architecture, Expansin-like EG45 spans 45-160 (GGACGYGNLY…RRVRCWRRGG (116 aa)). Positions 170–249 (HFELVLVANV…GWKFGQTFST (80 aa)) constitute an Expansin-like CBD domain.

This sequence belongs to the expansin family. Expansin A subfamily.

Its subcellular location is the secreted. The protein resides in the cell wall. It is found in the membrane. In terms of biological role, may cause loosening and extension of plant cell walls by disrupting non-covalent bonding between cellulose microfibrils and matrix glucans. No enzymatic activity has been found. May be required for rapid internodal elongation in deepwater rice during submergence. The protein is Putative expansin-A27 (EXPA27) of Oryza sativa subsp. japonica (Rice).